We begin with the raw amino-acid sequence, 189 residues long: Xanthine phosphoribosyltransferase (189 aa).

Xanthine-binding residues include Leu20 and Asn27. 128–132 (ANGEA) serves as a coordination point for 5-phospho-alpha-D-ribose 1-diphosphate. Lys156 is a binding site for xanthine.

Belongs to the purine/pyrimidine phosphoribosyltransferase family. Xpt subfamily. Homodimer.

The protein resides in the cytoplasm. It carries out the reaction XMP + diphosphate = xanthine + 5-phospho-alpha-D-ribose 1-diphosphate. It functions in the pathway purine metabolism; XMP biosynthesis via salvage pathway; XMP from xanthine: step 1/1. Converts the preformed base xanthine, a product of nucleic acid breakdown, to xanthosine 5'-monophosphate (XMP), so it can be reused for RNA or DNA synthesis. The protein is Xanthine phosphoribosyltransferase of Clostridium acetobutylicum (strain ATCC 824 / DSM 792 / JCM 1419 / IAM 19013 / LMG 5710 / NBRC 13948 / NRRL B-527 / VKM B-1787 / 2291 / W).